The sequence spans 253 residues: Small ribosomal subunit protein eS4 (253 aa).

The 72-residue stretch at Leu-43–Pro-114 folds into the S4 RNA-binding domain.

This sequence belongs to the eukaryotic ribosomal protein eS4 family.

The polypeptide is Small ribosomal subunit protein eS4 (rps4e) (Aeropyrum pernix (strain ATCC 700893 / DSM 11879 / JCM 9820 / NBRC 100138 / K1)).